The sequence spans 506 residues: Probable cytosol aminopeptidase (506 aa).

Mn(2+) is bound by residues K278 and D283. The active site involves K290. Mn(2+) contacts are provided by D301, D360, and E362. R364 is a catalytic residue.

This sequence belongs to the peptidase M17 family. The cofactor is Mn(2+).

It is found in the cytoplasm. The catalysed reaction is Release of an N-terminal amino acid, Xaa-|-Yaa-, in which Xaa is preferably Leu, but may be other amino acids including Pro although not Arg or Lys, and Yaa may be Pro. Amino acid amides and methyl esters are also readily hydrolyzed, but rates on arylamides are exceedingly low.. The enzyme catalyses Release of an N-terminal amino acid, preferentially leucine, but not glutamic or aspartic acids.. Its function is as follows. Presumably involved in the processing and regular turnover of intracellular proteins. Catalyzes the removal of unsubstituted N-terminal amino acids from various peptides. The sequence is that of Probable cytosol aminopeptidase from Ralstonia nicotianae (strain ATCC BAA-1114 / GMI1000) (Ralstonia solanacearum).